The primary structure comprises 351 residues: MRVDDFDFELPPELIARRPLAERSSSRLLCLDAETGEINHRGFKDLLGMVNPGDLLVFNDTRVIPARLFGQKRSGGKVEVMVERVVSMTEMLAHVRASKAPKPGVEILIEENYVLTMVEREGDLFRLRVSQGGSVSELLERCGHMPLPPYIDREDDLSDRERYQTVYSRQPGAVAAPTAGLHFDEALLLAMSQKGVETAFVTLHVGAGTFQPVRVDVVQDHQMHSEYLEVSADVCERVRQVKAAGGRVVAVGTTAVRALETASRSGSIEPYAGDTSIFIYPGYEFVTVDALVTNFHLPKSTLLMLVSAFAGREHILAAYQEAIEQRYRFFSYGDAMFLHRRQSGLEDAGAN.

Belongs to the QueA family. Monomer.

It localises to the cytoplasm. The enzyme catalyses 7-aminomethyl-7-carbaguanosine(34) in tRNA + S-adenosyl-L-methionine = epoxyqueuosine(34) in tRNA + adenine + L-methionine + 2 H(+). It functions in the pathway tRNA modification; tRNA-queuosine biosynthesis. Functionally, transfers and isomerizes the ribose moiety from AdoMet to the 7-aminomethyl group of 7-deazaguanine (preQ1-tRNA) to give epoxyqueuosine (oQ-tRNA). This Hahella chejuensis (strain KCTC 2396) protein is S-adenosylmethionine:tRNA ribosyltransferase-isomerase.